A 242-amino-acid chain; its full sequence is Probable transcriptional regulatory protein lp_2253 (242 aa).

Positions 1 to 21 (MSGHSKWHNIQGRKNAQDAKR) are disordered.

It belongs to the TACO1 family.

Its subcellular location is the cytoplasm. This chain is Probable transcriptional regulatory protein lp_2253, found in Lactiplantibacillus plantarum (strain ATCC BAA-793 / NCIMB 8826 / WCFS1) (Lactobacillus plantarum).